Here is a 270-residue protein sequence, read N- to C-terminus: UPF0162 protein PA3419 (270 aa).

It belongs to the UPF0162 family.

The sequence is that of UPF0162 protein PA3419 from Pseudomonas aeruginosa (strain ATCC 15692 / DSM 22644 / CIP 104116 / JCM 14847 / LMG 12228 / 1C / PRS 101 / PAO1).